Reading from the N-terminus, the 273-residue chain is Large ribosomal subunit protein uL2c (273 aa).

2 disordered regions span residues 30–55 (EKKL…RHRG) and 222–243 (GSAM…PIGR). Basic residues predominate over residues 45–55 (NKGRITTRHRG).

The protein belongs to the universal ribosomal protein uL2 family. Part of the 50S ribosomal subunit.

The protein localises to the plastid. The polypeptide is Large ribosomal subunit protein uL2c (rpl2) (Prototheca wickerhamii).